A 149-amino-acid chain; its full sequence is Macrodomain Ter protein (149 aa).

Belongs to the MatP family. In terms of assembly, homodimer.

The protein resides in the cytoplasm. Functionally, required for spatial organization of the terminus region of the chromosome (Ter macrodomain) during the cell cycle. Prevents early segregation of duplicated Ter macrodomains during cell division. Binds specifically to matS, which is a 13 bp signature motif repeated within the Ter macrodomain. This Vibrio campbellii (strain ATCC BAA-1116) protein is Macrodomain Ter protein.